A 351-amino-acid polypeptide reads, in one-letter code: Rhodopsin (351 aa).

At 1 to 36 the chain is on the extracellular side; the sequence is MNGTEGQDFYVPMSNKTGVVRSPFEYPQYYLAEPWK. 2 N-linked (GlcNAc...) asparagine glycosylation sites follow: Asn-2 and Asn-15. The helical transmembrane segment at 37-61 threads the bilayer; that stretch reads FSALAAYMFMLILLGFPVNFLTLYV. Over 62–73 the chain is Cytoplasmic; sequence TIQHKKLRTPLN. Residues 74-96 form a helical membrane-spanning segment; the sequence is YILLNLVVADLFMVFGGFTTTMY. Residues 97 to 110 are Extracellular-facing; sequence TSMNGYFVFGVTGC. Residues Cys-110 and Cys-187 are joined by a disulfide bond. The helical transmembrane segment at 111–133 threads the bilayer; it reads YIEGFFATLGGEIALWSLVVLAV. Residues 134–136 carry the 'Ionic lock' involved in activated form stabilization motif; sequence ERY. Topologically, residues 134–152 are cytoplasmic; it reads ERYVVVCKPMSNFRFGENH. The chain crosses the membrane as a helical span at residues 153 to 173; the sequence is AIMGVAFSWIMAMACAAPPLF. Topologically, residues 174–202 are extracellular; it reads GWSRYIPEGMQCSCGIDYYTLKPEINNES. Residues 203–224 form a helical membrane-spanning segment; it reads FVIYMFVVHFMIPLAVIFFCYG. At 225-252 the chain is on the cytoplasmic side; the sequence is NLVCTVKEAAAQQQESATTQKAEKEVTR. The helical transmembrane segment at 253 to 274 threads the bilayer; that stretch reads MVIIMVIAFLICWVPYASVAFY. The Extracellular portion of the chain corresponds to 275 to 286; sequence IFTNQGSDFGPI. A helical transmembrane segment spans residues 287-308; sequence FMTIPAFFAKSSAIYNPVIYIV. An N6-(retinylidene)lysine modification is found at Lys-296. Residues 309–351 lie on the Cytoplasmic side of the membrane; that stretch reads MNKQFRNCMITTLCCGKNPLGDEDTSAGKTETSSVSTSQVSPA. S-palmitoyl cysteine attachment occurs at residues Cys-322 and Cys-323. The segment at 331–351 is disordered; sequence EDTSAGKTETSSVSTSQVSPA. Low complexity predominate over residues 340 to 351; sequence TSSVSTSQVSPA. Position 341 is a phosphoserine; by RK and GRK7 (Ser-341).

It belongs to the G-protein coupled receptor 1 family. Opsin subfamily. In terms of processing, contains one covalently linked retinal chromophore. Upon light absorption, the covalently bound 11-cis-retinal is converted to all-trans-retinal. After hydrolysis of the Schiff base and release of the covalently bound all-trans-retinal, active rhodopsin is regenerated by binding of a fresh molecule of 11-cis-retinal.

It localises to the membrane. It is found in the cell projection. Its subcellular location is the cilium. The protein localises to the photoreceptor outer segment. In terms of biological role, photoreceptor required for image-forming vision at low light intensity. Required for photoreceptor cell viability after birth. Light-induced isomerization of 11-cis to all-trans retinal triggers a conformational change that activates signaling via G-proteins. Subsequent receptor phosphorylation mediates displacement of the bound G-protein alpha subunit by arrestin and terminates signaling. The sequence is that of Rhodopsin (RHO) from Gallus gallus (Chicken).